Consider the following 222-residue polypeptide: Cytidylate kinase (222 aa).

11–19 (GPSGSGKST) contacts ATP.

Belongs to the cytidylate kinase family. Type 1 subfamily.

It localises to the cytoplasm. The enzyme catalyses CMP + ATP = CDP + ADP. The catalysed reaction is dCMP + ATP = dCDP + ADP. The chain is Cytidylate kinase from Ureaplasma urealyticum serovar 10 (strain ATCC 33699 / Western).